A 396-amino-acid polypeptide reads, in one-letter code: Elongation factor Tu (396 aa).

One can recognise a tr-type G domain in the interval 10–205 (KPHVNIGTIG…ACDDNIPDPV (196 aa)). Residues 19–26 (GHVDHGKT) are G1. GTP is bound at residue 19-26 (GHVDHGKT). T26 provides a ligand contact to Mg(2+). The G2 stretch occupies residues 62-66 (GITIN). The G3 stretch occupies residues 83-86 (DAPG). GTP is bound by residues 83-87 (DAPGH) and 138-141 (NKCD). Positions 138–141 (NKCD) are G4. Residues 175–177 (SAL) are G5.

It belongs to the TRAFAC class translation factor GTPase superfamily. Classic translation factor GTPase family. EF-Tu/EF-1A subfamily. Monomer.

It is found in the cytoplasm. It catalyses the reaction GTP + H2O = GDP + phosphate + H(+). GTP hydrolase that promotes the GTP-dependent binding of aminoacyl-tRNA to the A-site of ribosomes during protein biosynthesis. The polypeptide is Elongation factor Tu (Corynebacterium efficiens (strain DSM 44549 / YS-314 / AJ 12310 / JCM 11189 / NBRC 100395)).